The chain runs to 317 residues: MKVLWAALLVTFLAGCQAKVEQPVEPETEPELRQQAEWQSGQPWELALGRFWDYLRWVQTLSEQVQEELLSPQVTQELTTLMDETMKELKAYKSELEEQLSPVAEETRARLSKELQAAQARLGADMEDVRSRLVQYRSEVQAMLGQSTEELRARLASHLRKLRKRLLRDADDLQKRLAVYQAGAREGAERGVSAIRERLGPLVEQGRVRAATVGSLASQPLQERAQALGERLRARMEEMGSRTRDRLDEVKEQVAEVRAKLEEQAQQISLQAEAFQARLKSWFEPLVEDMQRQWAGLVEKVQAAVGASTAPVPSDNH.

Positions 1 to 18 (MKVLWAALLVTFLAGCQA) are cleaved as a signal peptide. Tandem repeats lie at residues 80–101 (TLMDETMKELKAYKSELEEQLS), 102–123 (PVAEETRARLSKELQAAQARLG), 124–145 (ADMEDVRSRLVQYRSEVQAMLG), 146–167 (QSTEELRARLASHLRKLRKRLL), 168–189 (RDADDLQKRLAVYQAGAREGAE), 190–211 (RGVSAIRERLGPLVEQGRVRAA), 212–233 (TVGSLASQPLQERAQALGERLR), and 234–255 (ARMEEMGSRTRDRLDEVKEQVA). Positions 80 to 255 (TLMDETMKEL…RLDEVKEQVA (176 aa)) are 8 X 22 AA approximate tandem repeats. Methionine sulfoxide is present on methionine 143. Residue serine 147 is modified to Phosphoserine. Positions 158–168 (HLRKLRKRLLR) are LDL and other lipoprotein receptors binding. 162–165 (LRKR) contributes to the heparin binding site. Residues 210–290 (AATVGSLASQ…SWFEPLVEDM (81 aa)) form a lipid-binding and lipoprotein association region. 229–236 (GERLRARM) is a binding site for heparin. Positions 266-317 (QQISLQAEAFQARLKSWFEPLVEDMQRQWAGLVEKVQAAVGASTAPVPSDNH) are homooligomerization. Positions 278–290 (RLKSWFEPLVEDM) are specificity for association with VLDL.

Belongs to the apolipoprotein A1/A4/E family. As to quaternary structure, homotetramer. May interact with ABCA1; functionally associated with ABCA1 in the biogenesis of HDLs. May interact with APP/A4 amyloid-beta peptide; the interaction is extremely stable in vitro but its physiological significance is unclear. May interact with MAPT. May interact with MAP2. In the cerebrospinal fluid, interacts with secreted SORL1. Interacts with PMEL; this allows the loading of PMEL luminal fragment on ILVs to induce fibril nucleation. Post-translationally, APOE exists as multiple glycosylated and sialylated glycoforms within cells and in plasma. The extent of glycosylation and sialylation are tissue and context specific. In terms of processing, glycated in plasma VLDL. Phosphorylated by FAM20C in the extracellular medium.

The protein localises to the secreted. Its subcellular location is the extracellular space. The protein resides in the extracellular matrix. It is found in the extracellular vesicle. It localises to the endosome. The protein localises to the multivesicular body. Its function is as follows. APOE is an apolipoprotein, a protein associating with lipid particles, that mainly functions in lipoprotein-mediated lipid transport between organs via the plasma and interstitial fluids. APOE is a core component of plasma lipoproteins and is involved in their production, conversion and clearance. Apolipoproteins are amphipathic molecules that interact both with lipids of the lipoprotein particle core and the aqueous environment of the plasma. As such, APOE associates with chylomicrons, chylomicron remnants, very low density lipoproteins (VLDL) and intermediate density lipoproteins (IDL) but shows a preferential binding to high-density lipoproteins (HDL). It also binds a wide range of cellular receptors including the LDL receptor/LDLR, the LDL receptor-related proteins LRP1, LRP2 and LRP8 and the very low-density lipoprotein receptor/VLDLR that mediate the cellular uptake of the APOE-containing lipoprotein particles. Finally, APOE also has a heparin-binding activity and binds heparan-sulfate proteoglycans on the surface of cells, a property that supports the capture and the receptor-mediated uptake of APOE-containing lipoproteins by cells. A main function of APOE is to mediate lipoprotein clearance through the uptake of chylomicrons, VLDLs, and HDLs by hepatocytes. APOE is also involved in the biosynthesis by the liver of VLDLs as well as their uptake by peripheral tissues ensuring the delivery of triglycerides and energy storage in muscle, heart and adipose tissues. By participating in the lipoprotein-mediated distribution of lipids among tissues, APOE plays a critical role in plasma and tissues lipid homeostasis. APOE is also involved in two steps of reverse cholesterol transport, the HDLs-mediated transport of cholesterol from peripheral tissues to the liver, and thereby plays an important role in cholesterol homeostasis. First, it is functionally associated with ABCA1 in the biogenesis of HDLs in tissues. Second, it is enriched in circulating HDLs and mediates their uptake by hepatocytes. APOE also plays an important role in lipid transport in the central nervous system, regulating neuron survival and sprouting. This Papio anubis (Olive baboon) protein is Apolipoprotein E (APOE).